Consider the following 314-residue polypeptide: Nodulation protein D 1 (314 aa).

One can recognise an HTH lysR-type domain in the interval Leu6–Thr63. Positions Leu23–Ala42 form a DNA-binding region, H-T-H motif.

The protein belongs to the LysR transcriptional regulatory family.

Its function is as follows. NodD regulates the expression of the nodABCFE genes which encode other nodulation proteins. NodD is also a negative regulator of its own expression. Binds flavonoids as inducers. In Bradyrhizobium elkanii, this protein is Nodulation protein D 1 (nodD1).